The chain runs to 429 residues: Ribosomal RNA small subunit methyltransferase B (429 aa).

Residues 254 to 260 (CAGPGGK), Asp-277, Asp-303, and Asp-322 each bind S-adenosyl-L-methionine. Residue Cys-375 is the Nucleophile of the active site.

This sequence belongs to the class I-like SAM-binding methyltransferase superfamily. RsmB/NOP family.

The protein localises to the cytoplasm. The enzyme catalyses cytidine(967) in 16S rRNA + S-adenosyl-L-methionine = 5-methylcytidine(967) in 16S rRNA + S-adenosyl-L-homocysteine + H(+). Its function is as follows. Specifically methylates the cytosine at position 967 (m5C967) of 16S rRNA. This Escherichia coli O6:K15:H31 (strain 536 / UPEC) protein is Ribosomal RNA small subunit methyltransferase B.